A 508-amino-acid chain; its full sequence is Ras association domain-containing protein 10 (508 aa).

Positions 1 to 133 constitute a Ras-associating domain; it reads MDPSEKKISV…VRFVLVRSEA (133 aa). 2 disordered regions span residues 51 to 81 and 186 to 221; these read RRGLTEDPSGQLELPEPPDENDEDDDDAMPP and KLNRRRQQQPSSPCSSTSSSTASSCSSSARTHESAS. Residues 66–78 show a composition bias toward acidic residues; the sequence is EPPDENDEDDDDA. A compositionally biased stretch (low complexity) spans 195 to 214; it reads PSSPCSSTSSSTASSCSSSA. Coiled coils occupy residues 235–266 and 319–358; these read QDHTIRQQVQRLRELDREIDRYEAKVHLDRMR and LEELARRCDDLVRLQEERAQQEELLERLSAEIQEELNQRW. Residues 473–508 are disordered; sequence GLAKSCPGNDEDSDTGLSSMHSQDSDSVPPVCESLV. A compositionally biased stretch (polar residues) spans 487–498; that stretch reads TGLSSMHSQDSD.

As to expression, expressed in neural progenitor cells (at protein level).

It localises to the cytoplasm. Its subcellular location is the cytosol. The protein resides in the cytoskeleton. The protein localises to the microtubule organizing center. It is found in the centrosome. It localises to the spindle pole. Functionally, plays an important role in regulating embryonic neurogenesis. The polypeptide is Ras association domain-containing protein 10 (Rassf10) (Mus musculus (Mouse)).